Reading from the N-terminus, the 560-residue chain is MDIKRTILIAALAVVSYVMVLKWNDDYGQAALPTQNTAASTVAPGLPDGVPAGNNGASADVPSANAESSPAELAPVALSKDLIRVKTDVLELAIDPVGGDIVQLNLPKYPRRQDHPDIPFQLFDNGGERVYLAQSGLTGANGPDARASGRPLYAAEQKSYQLADGQEQLVVDLKFSDNGVNYIKRFSFKRGEYDLNVSYLIDNQSGQAWSGNMFAQLKRDASGDPSSSTATGTATYLGAALWTASEPYKKVSMKDIDKGGLKENVSGGWVAWLQHYFVTAWIPAKSDNNVVQTRKDSQGNYIIGYTGPVISVPAGGKVETSAMLYAGPKIQSKLKELSPGLELTVDYGFLWFIAQPIFWLLQHIHSLLGNWGWSIIVLTMLIKGLFFPLSAASYRSMARMRAVAPKLAALKERFGDDRQKMSQAMMELYKKEKINPLGGCLPILVQMPVFLALYWVLLESVEMRQAPWMLWITDLSIKDPFFILPIIMGATMFIQQRLNPTPPDPMQAKVMKMMPIIFTFFFLWFPAGLVLYWVVNNCLSISQQWYITRRIEAATKKAAA.

A helical membrane pass occupies residues 1 to 21; the sequence is MDIKRTILIAALAVVSYVMVL. Residues 42–66 form a disordered region; the sequence is VAPGLPDGVPAGNNGASADVPSANA. 5 helical membrane-spanning segments follow: residues 341–361, 367–387, 437–457, 468–488, and 515–535; these read LELT…FWLL, LLGN…GLFF, LGGC…YWVL, WMLW…PIIM, and PIIF…YWVV.

Belongs to the OXA1/ALB3/YidC family. Type 1 subfamily. Interacts with the Sec translocase complex via SecD. Specifically interacts with transmembrane segments of nascent integral membrane proteins during membrane integration.

The protein resides in the cell inner membrane. Its function is as follows. Required for the insertion and/or proper folding and/or complex formation of integral membrane proteins into the membrane. Involved in integration of membrane proteins that insert both dependently and independently of the Sec translocase complex, as well as at least some lipoproteins. Aids folding of multispanning membrane proteins. This chain is Membrane protein insertase YidC, found in Pseudomonas putida (strain GB-1).